The sequence spans 311 residues: Pyrimidine-specific ribonucleoside hydrolase RihA (311 aa).

The active site involves His240.

It belongs to the IUNH family. RihA subfamily.

Its function is as follows. Hydrolyzes with equal efficiency cytidine or uridine to ribose and cytosine or uracil, respectively. In Escherichia coli O17:K52:H18 (strain UMN026 / ExPEC), this protein is Pyrimidine-specific ribonucleoside hydrolase RihA.